We begin with the raw amino-acid sequence, 760 residues long: Mitochondrial intermediate peptidase (760 aa).

Residues 1–19 (MLARSVRTLVVSPKTVFRF) constitute a mitochondrion transit peptide. Residue histidine 543 coordinates Zn(2+). Glutamate 544 is an active-site residue. Residue histidine 547 coordinates Zn(2+).

It belongs to the peptidase M3 family. Zn(2+) is required as a cofactor.

It is found in the mitochondrion matrix. It carries out the reaction Release of an N-terminal octapeptide as second stage of processing of some proteins imported into the mitochondrion.. Functionally, cleaves proteins, imported into the mitochondrion, to their mature size. While most mitochondrial precursor proteins are processed to the mature form in one step by mitochondrial processing peptidase (MPP), the sequential cleavage by MIP of an octapeptide after initial processing by MPP is a required step for a subgroup of nuclear-encoded precursor proteins destined for the matrix or the inner membrane. The polypeptide is Mitochondrial intermediate peptidase (OCT1) (Leucoagaricus gongylophorus (Leaf-cutting ant fungus)).